Here is a 196-residue protein sequence, read N- to C-terminus: MPKKGVEPVRREQLIRATFQTIDEIGMADATVATIAKKAGLSSGIVAHYFGDKDGLLNAAMRQILRELKEAVARYRADAGDDPRDQLRAIVDGNFDDSQINGTAMRVWLTFWAASMHQPELARLQRANDQRLFSNLCHQFNRLLPHPQARLAARGLAAMIDGLWLRGSLVGGQFNAEKSRRIAYGYIDFQLQAAAL.

Positions 8 to 68 (PVRREQLIRA…AAMRQILREL (61 aa)) constitute an HTH tetR-type domain. The H-T-H motif DNA-binding region spans 31–50 (TVATIAKKAGLSSGIVAHYF).

Its pathway is amine and polyamine biosynthesis; betaine biosynthesis via choline pathway [regulation]. In terms of biological role, repressor involved in the biosynthesis of the osmoprotectant glycine betaine. It represses transcription of the choline transporter BetT and the genes of BetAB involved in the synthesis of glycine betaine. This is HTH-type transcriptional regulator BetI from Stenotrophomonas maltophilia (strain R551-3).